The chain runs to 179 residues: Putative 5'(3')-deoxyribonucleotidase (179 aa).

The active-site Nucleophile is the Asp-9. Asp-9, Asp-11, and Asp-135 together coordinate Mg(2+). Asp-11 acts as the Proton donor in catalysis.

This sequence belongs to the 5'(3')-deoxyribonucleotidase family. The cofactor is Mg(2+).

Dephosphorylates the 5' and 2'(3')-phosphates of deoxyribonucleotides. This chain is Putative 5'(3')-deoxyribonucleotidase, found in Staphylococcus epidermidis (strain ATCC 35984 / DSM 28319 / BCRC 17069 / CCUG 31568 / BM 3577 / RP62A).